Reading from the N-terminus, the 164-residue chain is S-ribosylhomocysteine lyase (164 aa).

Fe cation contacts are provided by His-54, His-58, and Cys-128.

This sequence belongs to the LuxS family. Homodimer. Requires Fe cation as cofactor.

It carries out the reaction S-(5-deoxy-D-ribos-5-yl)-L-homocysteine = (S)-4,5-dihydroxypentane-2,3-dione + L-homocysteine. Involved in the synthesis of autoinducer 2 (AI-2) which is secreted by bacteria and is used to communicate both the cell density and the metabolic potential of the environment. The regulation of gene expression in response to changes in cell density is called quorum sensing. Catalyzes the transformation of S-ribosylhomocysteine (RHC) to homocysteine (HC) and 4,5-dihydroxy-2,3-pentadione (DPD). The sequence is that of S-ribosylhomocysteine lyase from Campylobacter jejuni subsp. jejuni serotype O:23/36 (strain 81-176).